A 191-amino-acid chain; its full sequence is tRNA-specific adenosine deaminase 2 (191 aa).

One can recognise a CMP/dCMP-type deaminase domain in the interval 20–145 (EETEKWMEQA…SVLDIASADL (126 aa)). Histidine 71 provides a ligand contact to Zn(2+). Residue glutamate 73 is the Proton donor of the active site. Zn(2+) contacts are provided by cysteine 107 and cysteine 110.

It belongs to the cytidine and deoxycytidylate deaminase family. ADAT2 subfamily. The cofactor is Zn(2+).

The catalysed reaction is adenosine(34) in tRNA + H2O + H(+) = inosine(34) in tRNA + NH4(+). Probably participates in deamination of adenosine-34 to inosine in many tRNAs. The sequence is that of tRNA-specific adenosine deaminase 2 (DEADC1) from Bos taurus (Bovine).